We begin with the raw amino-acid sequence, 427 residues long: MAAKWEKLEGNVGVLTIEVDAKEVNKSLDAAFKKVVKTINVPGFRKGKMPRPLFEQRFGVESLYQDALDIILPKAYSEAIDETGIFPVAHPEIDIEKFEKNENLVFTAKVTVKPEVKLGEYKGLAVEKIDTTVTDEDVENELKALQERQAELVVKEDGTVENGDTAVIDFEGFVNGEAFEGGKGENYSLAIGSGTFIPGFEEQLIGLKAGESKDVEVTFPEEYHAEELAGKPATFKVTVHEIKAKELPELNDEFAKDVNEEVATLDELKAKLRTDLEEGKKHEAEHKVRDEVVEKAAANAEIDIPEAMIETELDRMVREFEQRLSQQGMNLELYYQFTGTDADKLKEQMKEDAQKRVRINLVLEAIIKAENIEVAEEEVNAEIEKMAEMYNMPVDAIKQALGSAEALAEDLKVRKAVDFLVDNSKAA.

One can recognise a PPIase FKBP-type domain in the interval 163-248 (GDTAVIDFEG…VHEIKAKELP (86 aa)).

It belongs to the FKBP-type PPIase family. Tig subfamily.

Its subcellular location is the cytoplasm. It catalyses the reaction [protein]-peptidylproline (omega=180) = [protein]-peptidylproline (omega=0). Involved in protein export. Acts as a chaperone by maintaining the newly synthesized protein in an open conformation. Functions as a peptidyl-prolyl cis-trans isomerase. This Bacillus cytotoxicus (strain DSM 22905 / CIP 110041 / 391-98 / NVH 391-98) protein is Trigger factor.